The primary structure comprises 654 residues: MDLHTAVYNAAHDGKLPLLQKLLASRGREELEELLGEVAGGGTPLLIAARRGHLDVVEYLVDHCGASVEASGSVHFDGETIEGAPPLWAASAAGHLAVVRSLLHRGASVNRTTCTNSTPLRAACFNGHLDVVRCLVGEHKADLEVANRHGHTCLMISCYKGHREIARYLLERGAQVNRRSAKGNTALHDCAESGSLEILQLLLSCHARMERDGYGMTPLLAASITGHTNIVEYLIQEQPSHEQLSGTELPGEGSSQMAGNHCSTPEDAEQYESCCPTSREAAVEALELLGATYVDKKRDLLGALKHWRRAMELRHQGGGFLPKPEPQQLVLAYDYSREVTTPQELEALITDPDEMRMQALLIRERILGPSHPDTSYYIRYRGAVYADSGNFERCIRLWKYALDMQQNNLEPLSPMTASSFLSFAELFSYVLQDHSAKGNLGMQLDFADLIGVLSKGVREVERALQLPKEPDDSAQFTKAIAIILHLLYLLEKVECTPRQEHLKHQTVYRLLKCAPRGKNGFTPLHMAVDKETTNVGQYHVGVFPSLQVVKVLLDCGADPDSRDFDNNSPLHIAAQNNCPAIMDALIEAGAHMDATNTFKKTAYELLDSKLLAKSTVQPFNYVTLQCLAARALDRNKVPYKGFIPEELEAFIQLH.

7 ANK repeats span residues 2–31 (DLHT…REEL), 40–70 (GGGT…SVEA), 82–111 (EGAP…SVNR), 115–145 (TNST…DLEV), 149–178 (HGHT…QVNR), 182–211 (KGNT…RMER), and 214–243 (YGMT…SHEQ). Ser108 is modified (phosphoserine). Residues 241–265 (HEQLSGTELPGEGSSQMAGNHCSTP) are disordered. Positions 253–263 (GSSQMAGNHCS) are enriched in polar residues. TPR repeat units lie at residues 283–317 (VEAL…RHQG) and 375–408 (SYYI…QQNN). 2 ANK repeats span residues 519 to 561 (NGFT…DPDS) and 565 to 594 (DNNS…HMDA). A Phosphoserine modification is found at Ser608.

Belongs to the fem-1 family. Component of a CRL2 E3 ubiquitin-protein ligase complex, also named ECS (Elongin BC-CUL2/5-SOCS-box protein) complex, composed of CUL2, Elongin BC (ELOB and ELOC), RBX1 and substrate-specific adapter FEM1A.

The protein localises to the mitochondrion. Its subcellular location is the cytoplasm. It participates in protein modification; protein ubiquitination. Its function is as follows. Substrate-recognition component of a Cul2-RING (CRL2) E3 ubiquitin-protein ligase complex of the DesCEND (destruction via C-end degrons) pathway, which recognizes a C-degron located at the extreme C terminus of target proteins, leading to their ubiquitination and degradation. The C-degron recognized by the DesCEND pathway is usually a motif of less than ten residues and can be present in full-length proteins, truncated proteins or proteolytically cleaved forms. The CRL2(FEM1A) complex specifically recognizes proteins with an arginine at the C-terminus: recognizes and binds proteins ending with -Lys/Arg-Xaa-Arg and -Lys/Arg-Xaa-Xaa-Arg C-degrons, such as SIL1 or OR51B2, leading to their ubiquitination and degradation. In Mus musculus (Mouse), this protein is Protein fem-1 homolog A-like.